The primary structure comprises 554 residues: Dihydroxy-acid dehydratase (554 aa).

Residue aspartate 78 coordinates Mg(2+). Residue cysteine 119 coordinates [2Fe-2S] cluster. Mg(2+) contacts are provided by aspartate 120 and lysine 121. Lysine 121 carries the N6-carboxylysine modification. Cysteine 192 contacts [2Fe-2S] cluster. Position 443 (glutamate 443) interacts with Mg(2+). Serine 469 serves as the catalytic Proton acceptor.

It belongs to the IlvD/Edd family. In terms of assembly, homodimer. [2Fe-2S] cluster is required as a cofactor. Requires Mg(2+) as cofactor.

It catalyses the reaction (2R)-2,3-dihydroxy-3-methylbutanoate = 3-methyl-2-oxobutanoate + H2O. The catalysed reaction is (2R,3R)-2,3-dihydroxy-3-methylpentanoate = (S)-3-methyl-2-oxopentanoate + H2O. It participates in amino-acid biosynthesis; L-isoleucine biosynthesis; L-isoleucine from 2-oxobutanoate: step 3/4. It functions in the pathway amino-acid biosynthesis; L-valine biosynthesis; L-valine from pyruvate: step 3/4. Its function is as follows. Functions in the biosynthesis of branched-chain amino acids. Catalyzes the dehydration of (2R,3R)-2,3-dihydroxy-3-methylpentanoate (2,3-dihydroxy-3-methylvalerate) into 2-oxo-3-methylpentanoate (2-oxo-3-methylvalerate) and of (2R)-2,3-dihydroxy-3-methylbutanoate (2,3-dihydroxyisovalerate) into 2-oxo-3-methylbutanoate (2-oxoisovalerate), the penultimate precursor to L-isoleucine and L-valine, respectively. This Shouchella clausii (strain KSM-K16) (Alkalihalobacillus clausii) protein is Dihydroxy-acid dehydratase.